Reading from the N-terminus, the 380-residue chain is tRNA-specific 2-thiouridylase MnmA (380 aa).

ATP-binding positions include 9–16 (GVSGGVDS) and methionine 35. Positions 94 to 96 (NPD) are interaction with target base in tRNA. Cysteine 99 acts as the Nucleophile in catalysis. The cysteines at positions 99 and 195 are disulfide-linked. Glycine 123 contacts ATP. Residues 145–147 (KDQ) are interaction with tRNA. Cysteine 195 functions as the Cysteine persulfide intermediate in the catalytic mechanism. An interaction with tRNA region spans residues 308–309 (RY).

Belongs to the MnmA/TRMU family.

It localises to the cytoplasm. It carries out the reaction S-sulfanyl-L-cysteinyl-[protein] + uridine(34) in tRNA + AH2 + ATP = 2-thiouridine(34) in tRNA + L-cysteinyl-[protein] + A + AMP + diphosphate + H(+). Functionally, catalyzes the 2-thiolation of uridine at the wobble position (U34) of tRNA, leading to the formation of s(2)U34. This Stenotrophomonas maltophilia (strain K279a) protein is tRNA-specific 2-thiouridylase MnmA.